An 817-amino-acid polypeptide reads, in one-letter code: Dolichyl-phosphate-mannose--protein mannosyltransferase 1 (817 aa).

Ser2 bears the N-acetylserine mark. Residues 2–50 lie on the Cytoplasmic side of the membrane; sequence SEEKTYKRVEQDDPVPELDIKQGPVRPFIVTDPSAELASLRTMVTLKEK. The helical transmembrane segment at 51-70 threads the bilayer; it reads LLVACLAVFTAVIRLHGLAW. The Lumenal portion of the chain corresponds to 71–135; that stretch reads PDSVVFDEVH…DSFPSTTPYV (65 aa). The chain crosses the membrane as a helical span at residues 136–154; the sequence is LMRFFSASLGALTVILMYM. The Cytoplasmic segment spans residues 155 to 179; sequence TLRYSGVRMWVALMSAICFAVENSY. A helical membrane pass occupies residues 180–200; that stretch reads VTISRYILLDAPLMFFIAAAV. The Lumenal portion of the chain corresponds to 201–234; the sequence is YSFKKYEMYPANSLNAYKSLLATGIALGMASSSK. The helical transmembrane segment at 235–259 threads the bilayer; that stretch reads WVGLFTVTWVGLLCIWRLWFMIGDL. At 260–273 the chain is on the cytoplasmic side; it reads TKSSKSIFKVAFAK. Residues 274-291 form a helical membrane-spanning segment; sequence LAFLLGVPFALYLVFFYI. The Lumenal portion of the chain corresponds to 292–584; the sequence is HFQSLTLDGD…GENNRNVYLL (293 aa). MIR domains lie at 324–378, 388–448, and 459–514; these read VADV…LELY, FQNL…VEID, and ERVI…VENN. 2 N-linked (GlcNAc...) asparagine glycosylation sites follow: Asn390 and Asn513. The helical transmembrane segment at 585–605 threads the bilayer; that stretch reads GNAIVWWAVTAFIGIFGLIVI. Over 606–685 the chain is Cytoplasmic; sequence TELFSWQLGK…SYVFRSKRQM (80 aa). The chain crosses the membrane as a helical span at residues 686 to 710; that stretch reads GYAVVITFLAASVYFFKSFSPIIYG. Residues 711 to 817 lie on the Lumenal side of the membrane; it reads TPWTQELCQK…LKVEKRAVLE (107 aa). N-linked (GlcNAc...) asparagine glycosylation occurs at Asn743.

This sequence belongs to the glycosyltransferase 39 family. PMT1 and PMT2 form a functional heterodimer. The complex interacts with endoplasmic reticulum proteins EMP24, ERV25, ERP1, ERP2, CDC48, HRD1, USA1, YOS9, ERO1, PDI1, UBR1, Cue4, DFM1 and TED1. Forms also a minor complex with PMT3.

It localises to the endoplasmic reticulum membrane. It catalyses the reaction a di-trans,poly-cis-dolichyl beta-D-mannosyl phosphate + L-seryl-[protein] = 3-O-(alpha-D-mannosyl)-L-seryl-[protein] + a di-trans,poly-cis-dolichyl phosphate + H(+). The catalysed reaction is a di-trans,poly-cis-dolichyl beta-D-mannosyl phosphate + L-threonyl-[protein] = 3-O-(alpha-D-mannosyl)-L-threonyl-[protein] + a di-trans,poly-cis-dolichyl phosphate + H(+). It participates in protein modification; protein glycosylation. Protein O-mannosyltransferase involved in O-glycosylation which is essential for cell wall rigidity. Forms a heterodimeric complex with PMT2 and more rarely with PMT3 to transfer mannose from Dol-P-mannose to Ser or Thr residues on proteins. The PMT1-PMT2 complex participates in oxidative protein folding, ER-associated protein degradation (ERAD), as well as ER export. Required for incorporation of proteins in the cell wall. This chain is Dolichyl-phosphate-mannose--protein mannosyltransferase 1, found in Saccharomyces cerevisiae (strain ATCC 204508 / S288c) (Baker's yeast).